The sequence spans 321 residues: Annexin D3 (321 aa).

Alanine 2 carries the N-acetylalanine modification. 4 Annexin repeats span residues 11 to 82, 83 to 159, 171 to 243, and 247 to 318; these read PSPA…SWTY, DPAE…TLAS, EVAT…VAIF, and TPEK…TLLG. Ca(2+) is bound by residues glycine 26, glycine 28, and glutamate 68. Position 117 is a phosphothreonine (threonine 117). 2 residues coordinate Ca(2+): isoleucine 260 and glycine 264. Tyrosine 289 carries the post-translational modification Phosphotyrosine. Aspartate 304 contacts Ca(2+).

It belongs to the annexin (TC 1.A.31.1) family. As to expression, expressed mainly in roots and flowers. Lower in stems and leaves.

The sequence is that of Annexin D3 (ANN3) from Arabidopsis thaliana (Mouse-ear cress).